We begin with the raw amino-acid sequence, 180 residues long: Endoribonuclease YbeY (180 aa).

Positions 149, 153, and 159 each coordinate Zn(2+).

This sequence belongs to the endoribonuclease YbeY family. Zn(2+) is required as a cofactor.

Its subcellular location is the cytoplasm. Its function is as follows. Single strand-specific metallo-endoribonuclease involved in late-stage 70S ribosome quality control and in maturation of the 3' terminus of the 16S rRNA. The sequence is that of Endoribonuclease YbeY from Prochlorococcus marinus subsp. pastoris (strain CCMP1986 / NIES-2087 / MED4).